The following is a 25-amino-acid chain: Caerin-1.17 (25 aa).

The residue at position 25 (Leu25) is a Leucine amide.

It belongs to the frog skin active peptide (FSAP) family. Caerin subfamily. In terms of tissue distribution, expressed by the skin dorsal glands.

It is found in the secreted. In terms of biological role, caerin-1.17 shows significant activity against Gram-positive organisms, but is less effective against Gram-negative organisms. This is Caerin-1.17 from Ranoidea gracilenta (Dainty green tree frog).